An 834-amino-acid polypeptide reads, in one-letter code: DNA-directed RNA polymerase subunit beta' (834 aa).

Polar residues predominate over residues 1–22 (MTYSNKPTGSSLRSSRNSTLEP). The interval 1-45 (MTYSNKPTGSSLRSSRNSTLEPQSLVHREESKRQEGPKGQNLRIG) is disordered. Over residues 26-36 (VHREESKRQEG) the composition is skewed to basic and acidic residues. Positions 101, 103, 118, and 121 each coordinate Zn(2+). Asp-606, Asp-608, and Asp-610 together coordinate Mg(2+).

Belongs to the RNA polymerase beta' chain family. RpoC1 subfamily. In terms of assembly, in plastids the minimal PEP RNA polymerase catalytic core is composed of four subunits: alpha, beta, beta', and beta''. When a (nuclear-encoded) sigma factor is associated with the core the holoenzyme is formed, which can initiate transcription. Requires Mg(2+) as cofactor. It depends on Zn(2+) as a cofactor.

The protein resides in the plastid. It is found in the chloroplast. The catalysed reaction is RNA(n) + a ribonucleoside 5'-triphosphate = RNA(n+1) + diphosphate. Its function is as follows. DNA-dependent RNA polymerase catalyzes the transcription of DNA into RNA using the four ribonucleoside triphosphates as substrates. The chain is DNA-directed RNA polymerase subunit beta' from Staurastrum punctulatum (Green alga).